The chain runs to 586 residues: Alpha-1,2-mannosyltransferase MNN5 (586 aa).

A signal peptide spans 1–29 (MLIRLKKRKILQVIVSAVVLILFFCSVHN). Asn113, Asn136, Asn259, and Asn264 each carry an N-linked (GlcNAc...) asparagine glycan.

Belongs to the MNN1/MNT family. In terms of processing, glycosylated.

It localises to the golgi apparatus. The protein localises to the cis-Golgi network. It functions in the pathway protein modification; protein glycosylation. Functionally, responsible for addition of first and second mannose residues to the outer chain of core N-linked polysaccharides and to O-linked mannotriose. Implicated in late Golgi modifications. The polypeptide is Alpha-1,2-mannosyltransferase MNN5 (MNN5) (Saccharomyces cerevisiae (strain YJM789) (Baker's yeast)).